A 332-amino-acid chain; its full sequence is Phosphate acyltransferase (332 aa).

It belongs to the PlsX family. In terms of assembly, homodimer. Probably interacts with PlsY.

The protein localises to the cytoplasm. It catalyses the reaction a fatty acyl-[ACP] + phosphate = an acyl phosphate + holo-[ACP]. It participates in lipid metabolism; phospholipid metabolism. In terms of biological role, catalyzes the reversible formation of acyl-phosphate (acyl-PO(4)) from acyl-[acyl-carrier-protein] (acyl-ACP). This enzyme utilizes acyl-ACP as fatty acyl donor, but not acyl-CoA. In Streptococcus mutans serotype c (strain ATCC 700610 / UA159), this protein is Phosphate acyltransferase.